The primary structure comprises 103 residues: MQPTRILQGLKYRKLRLTTKDVNKGFYKGNRTGSMGTHTSYGTYKIDYTKVRTYVCPDLTGFKLTPFVSKTIRPVHDQFPGDKLGPKNPATYLARWKSENGLD.

The protein belongs to the mitochondrion-specific ribosomal protein mL41 family. In terms of assembly, component of the mitochondrial large ribosomal subunit (mt-LSU). Mature N.crassa 74S mitochondrial ribosomes consist of a small (37S) and a large (54S) subunit. The 37S small subunit contains a 16S ribosomal RNA (16S mt-rRNA) and 32 different proteins. The 54S large subunit contains a 23S rRNA (23S mt-rRNA) and 42 different proteins.

The protein resides in the mitochondrion. Functionally, component of the mitochondrial ribosome (mitoribosome), a dedicated translation machinery responsible for the synthesis of mitochondrial genome-encoded proteins, including at least some of the essential transmembrane subunits of the mitochondrial respiratory chain. The mitoribosomes are attached to the mitochondrial inner membrane and translation products are cotranslationally integrated into the membrane. This Neurospora crassa (strain ATCC 24698 / 74-OR23-1A / CBS 708.71 / DSM 1257 / FGSC 987) protein is Large ribosomal subunit protein mL41 (mrpl27).